Consider the following 309-residue polypeptide: Taste receptor type 2 member 64 (309 aa).

At 1 to 3 the chain is on the extracellular side; the sequence is MVY. Residues 4–26 form a helical membrane-spanning segment; sequence FLLIILSILVVFAFVLGNFSNGF. Residues 27-46 are Cytoplasmic-facing; sequence VALVNVIDWVKTRKISSADQ. The helical transmembrane segment at 47–69 threads the bilayer; it reads ILTALVVSRIGLLWVILFHWYAN. The Extracellular segment spans residues 70-83; that stretch reads VFNSALYSSEVGAV. Residues 84-106 form a helical membrane-spanning segment; it reads ASNISAIINHFSIWLAASLGIFY. Residues 107 to 126 lie on the Cytoplasmic side of the membrane; the sequence is LLKIANFSNLIFLHLKKRIR. Residues 127 to 149 form a helical membrane-spanning segment; sequence SVVLVILLGPLVFLICNLAVITM. Topologically, residues 150–176 are extracellular; the sequence is DERVWTKEYEGNVTWKIKLRNAIHLSD. A glycan (N-linked (GlcNAc...) asparagine) is linked at N161. The helical transmembrane segment at 177–199 threads the bilayer; it reads LTVSTLANLIPFILTLICFLLLI. Residues 200–230 lie on the Cytoplasmic side of the membrane; it reads CSLHKHLKKMQLHGKGSQDLSTKVHIKALQT. The chain crosses the membrane as a helical span at residues 231–253; that stretch reads VISFLMLYAIYFLYLITLTWNLW. Over 254 to 258 the chain is Extracellular; sequence TQQNK. Residues 259 to 281 traverse the membrane as a helical segment; that stretch reads LVFLLCQTLGIMYPSFHSFFLIM. Residues 282-309 lie on the Cytoplasmic side of the membrane; sequence GSRKLKQTFLSVLCQVTCLVKGQQPSTP.

This sequence belongs to the G-protein coupled receptor T2R family.

Its subcellular location is the membrane. In terms of biological role, receptor that may play a role in the perception of bitterness and is gustducin-linked. May play a role in sensing the chemical composition of the gastrointestinal content. The activity of this receptor may stimulate alpha gustducin, mediate PLC-beta-2 activation and lead to the gating of TRPM5. The chain is Taste receptor type 2 member 64 (TAS2R64) from Pan paniscus (Pygmy chimpanzee).